A 98-amino-acid chain; its full sequence is NADH-ubiquinone oxidoreductase chain 4L (98 aa).

The next 3 helical transmembrane spans lie at 1-21 (MSPILINMLLAFTISLIGLLI), 30-50 (LLCLEGMMLSLFILTSTLALT), and 61-81 (IILLVFAACEAAIGLSLLVMV).

This sequence belongs to the complex I subunit 4L family. As to quaternary structure, core subunit of respiratory chain NADH dehydrogenase (Complex I) which is composed of 45 different subunits.

The protein resides in the mitochondrion inner membrane. The catalysed reaction is a ubiquinone + NADH + 5 H(+)(in) = a ubiquinol + NAD(+) + 4 H(+)(out). Functionally, core subunit of the mitochondrial membrane respiratory chain NADH dehydrogenase (Complex I) which catalyzes electron transfer from NADH through the respiratory chain, using ubiquinone as an electron acceptor. Part of the enzyme membrane arm which is embedded in the lipid bilayer and involved in proton translocation. The sequence is that of NADH-ubiquinone oxidoreductase chain 4L (MT-ND4L) from Chrysochloris asiatica (Cape golden mole).